The chain runs to 449 residues: Gallate transporter (449 aa).

12 helical membrane-spanning segments follow: residues 26–46 (WLIL…VAVM), 62–82 (AAFG…ALTA), 92–112 (KKVL…CAFA), 123–143 (LLTG…LAEY), 155–175 (IMFT…AWLI), 183–203 (VLLA…WLLP), 262–282 (LALW…MGWL), 298–318 (TITG…GWIM), 326–346 (VIAI…ALSL), 349–369 (SLLV…QTAL), 388–408 (WMLG…GAVL), and 414–434 (LPLL…AILA).

It belongs to the major facilitator superfamily. Sugar transporter (TC 2.A.1.1) family.

The protein resides in the membrane. Its function is as follows. Transporter that specifically mediates the uptake of gallate. The chain is Gallate transporter (galT) from Pseudomonas putida (Arthrobacter siderocapsulatus).